Consider the following 95-residue polypeptide: U6 snRNA-associated Sm-like protein LSm2 (95 aa).

Positions 2–76 constitute a Sm domain; that stretch reads LFYSFFKSLV…VRYVQLPADE (75 aa). Thr79 is modified (phosphothreonine).

It belongs to the snRNP Sm proteins family. As to quaternary structure, component of the precatalytic spliceosome (spliceosome B complex). Component of the U4/U6-U5 tri-snRNP complex, a building block of the precatalytic spliceosome (spliceosome B complex). The U4/U6-U5 tri-snRNP complex is composed of the U4, U6 and U5 snRNAs and at least PRPF3, PRPF4, PRPF6, PRPF8, PRPF31, SNRNP200, TXNL4A, SNRNP40, SNRPB, SNRPD1, SNRPD2, SNRPD3, SNRPE, SNRPF, SNRPG, DDX23, CD2BP2, PPIH, SNU13, EFTUD2, SART1 and USP39, plus LSM2, LSM3, LSM4, LSM5, LSM6, LSM7 and LSM8. LSM2, LSM3, LSM4, LSM5, LSM6, LSM7 and LSM8 form a heptameric, ring-shaped subcomplex (the LSM2-8 complex) that is part of the U4/U6-U5 tri-snRNP complex and the precatalytic spliceosome.

Its subcellular location is the nucleus. Its function is as follows. Plays a role in pre-mRNA splicing as component of the U4/U6-U5 tri-snRNP complex that is involved in spliceosome assembly, and as component of the precatalytic spliceosome (spliceosome B complex). The heptameric LSM2-8 complex binds specifically to the 3'-terminal U-tract of U6 snRNA. The protein is U6 snRNA-associated Sm-like protein LSm2 (LSM2) of Homo sapiens (Human).